The chain runs to 1550 residues: Pentafunctional AROM polypeptide (1550 aa).

Residues 1-379 (MSIERVPILG…YQLKAHQVSK (379 aa)) are 3-dehydroquinate synthase. NAD(+) is bound by residues 42 to 44 (DTN), 80 to 83 (ENNK), 111 to 113 (GGV), and D116. R127 is a 7-phospho-2-dehydro-3-deoxy-D-arabino-heptonate binding site. 136–137 (TT) is a binding site for NAD(+). Residues D143 and K149 each contribute to the 7-phospho-2-dehydro-3-deoxy-D-arabino-heptonate site. Position 158 (K158) interacts with NAD(+). N159 is a 7-phospho-2-dehydro-3-deoxy-D-arabino-heptonate binding site. Residues 176–179 (FLET) and N187 contribute to the NAD(+) site. E191 contributes to the Zn(2+) binding site. 7-phospho-2-dehydro-3-deoxy-D-arabino-heptonate-binding positions include 191-194 (EVVK) and K243. The active-site Proton acceptor; for 3-dehydroquinate synthase activity is E253. Residues 257–261 (RNLLN) and H264 each bind 7-phospho-2-dehydro-3-deoxy-D-arabino-heptonate. H264 lines the Zn(2+) pocket. H268 (proton acceptor; for 3-dehydroquinate synthase activity) is an active-site residue. Residues H280 and K351 each contribute to the 7-phospho-2-dehydro-3-deoxy-D-arabino-heptonate site. H280 contributes to the Zn(2+) binding site. The segment at 392-837 (VHPFTNPPKE…WDILHSKFKI (446 aa)) is EPSP synthase. The segment at 857 to 1047 (DKGVIVIGMR…VPTGRSTAVV (191 aa)) is shikimate kinase. 864–871 (GMRGTGKS) is a binding site for ATP. The segment at 1048–1257 (LTLPDLNNVA…NDDGLLTIGE (210 aa)) is 3-dehydroquinase. The active-site Schiff-base intermediate with substrate; for 3-dehydroquinate dehydratase activity is the R1193. Residues 1270 to 1550 (AKKFWVIGSP…EIIHRAVVEE (281 aa)) are shikimate dehydrogenase.

This sequence in the N-terminal section; belongs to the sugar phosphate cyclases superfamily. Dehydroquinate synthase family. The protein in the 2nd section; belongs to the EPSP synthase family. It in the 3rd section; belongs to the shikimate kinase family. In the 4th section; belongs to the type-I 3-dehydroquinase family. This sequence in the C-terminal section; belongs to the shikimate dehydrogenase family. Homodimer. Requires Zn(2+) as cofactor.

The protein localises to the cytoplasm. The catalysed reaction is 7-phospho-2-dehydro-3-deoxy-D-arabino-heptonate = 3-dehydroquinate + phosphate. It carries out the reaction 3-dehydroquinate = 3-dehydroshikimate + H2O. It catalyses the reaction shikimate + NADP(+) = 3-dehydroshikimate + NADPH + H(+). The enzyme catalyses shikimate + ATP = 3-phosphoshikimate + ADP + H(+). The catalysed reaction is 3-phosphoshikimate + phosphoenolpyruvate = 5-O-(1-carboxyvinyl)-3-phosphoshikimate + phosphate. It participates in metabolic intermediate biosynthesis; chorismate biosynthesis; chorismate from D-erythrose 4-phosphate and phosphoenolpyruvate: step 2/7. Its pathway is metabolic intermediate biosynthesis; chorismate biosynthesis; chorismate from D-erythrose 4-phosphate and phosphoenolpyruvate: step 3/7. It functions in the pathway metabolic intermediate biosynthesis; chorismate biosynthesis; chorismate from D-erythrose 4-phosphate and phosphoenolpyruvate: step 4/7. The protein operates within metabolic intermediate biosynthesis; chorismate biosynthesis; chorismate from D-erythrose 4-phosphate and phosphoenolpyruvate: step 5/7. It participates in metabolic intermediate biosynthesis; chorismate biosynthesis; chorismate from D-erythrose 4-phosphate and phosphoenolpyruvate: step 6/7. Functionally, the AROM polypeptide catalyzes 5 consecutive enzymatic reactions in prechorismate polyaromatic amino acid biosynthesis. The protein is Pentafunctional AROM polypeptide of Candida dubliniensis (strain CD36 / ATCC MYA-646 / CBS 7987 / NCPF 3949 / NRRL Y-17841) (Yeast).